The chain runs to 403 residues: Forkhead box protein Q1 (403 aa).

Disordered stretches follow at residues M1–E75 and G94–R116. The segment covering L32–A48 has biased composition (low complexity). Positions A96 to E107 are enriched in gly residues. The segment at residues K119–K214 is a DNA-binding region (fork-head). Positions L216–K266 are disordered. Over residues P236–P246 the composition is skewed to pro residues.

As to expression, expressed predominantly in the stomach, trachea, bladder and salivary gland.

The protein resides in the nucleus. Plays a role in hair follicle differentiation. The polypeptide is Forkhead box protein Q1 (FOXQ1) (Homo sapiens (Human)).